The following is a 176-amino-acid chain: NAD(P)H-quinone oxidoreductase subunit 6, chloroplastic (176 aa).

The next 5 membrane-spanning stretches (helical) occupy residues phenylalanine 10–proline 30, proline 32–leucine 52, alanine 61–methionine 81, leucine 92–isoleucine 112, and phenylalanine 152–threonine 172.

The protein belongs to the complex I subunit 6 family. In terms of assembly, NDH is composed of at least 16 different subunits, 5 of which are encoded in the nucleus.

Its subcellular location is the plastid. The protein localises to the chloroplast thylakoid membrane. The enzyme catalyses a plastoquinone + NADH + (n+1) H(+)(in) = a plastoquinol + NAD(+) + n H(+)(out). The catalysed reaction is a plastoquinone + NADPH + (n+1) H(+)(in) = a plastoquinol + NADP(+) + n H(+)(out). Its function is as follows. NDH shuttles electrons from NAD(P)H:plastoquinone, via FMN and iron-sulfur (Fe-S) centers, to quinones in the photosynthetic chain and possibly in a chloroplast respiratory chain. The immediate electron acceptor for the enzyme in this species is believed to be plastoquinone. Couples the redox reaction to proton translocation, and thus conserves the redox energy in a proton gradient. In Daucus carota (Wild carrot), this protein is NAD(P)H-quinone oxidoreductase subunit 6, chloroplastic (ndhG).